A 287-amino-acid polypeptide reads, in one-letter code: uncharacterized protein (287 aa).

The ATP-grasp domain occupies 115-287 (PQNFDREWNP…NLAIELLKAI (173 aa)). Residues Lys-145 and 178–188 (QKYITCSKGES) each bind ATP. Mg(2+)-binding residues include Asp-248, Glu-261, and Asn-263. Mn(2+) contacts are provided by Asp-248, Glu-261, and Asn-263.

It belongs to the RimK family.

This is an uncharacterized protein from Mycoplasma genitalium (strain ATCC 33530 / DSM 19775 / NCTC 10195 / G37) (Mycoplasmoides genitalium).